The following is a 126-amino-acid chain: Fluoride-specific ion channel FluC (126 aa).

The next 4 helical transmembrane spans lie at 2 to 22, 37 to 57, 65 to 85, and 101 to 121; these read LTFA…GAWL, WGTL…VALI, AWIR…FSTF, and AAAY…LATV. The Na(+) site is built by Gly-77 and Thr-80.

It belongs to the fluoride channel Fluc/FEX (TC 1.A.43) family.

The protein resides in the cell inner membrane. The catalysed reaction is fluoride(in) = fluoride(out). Its activity is regulated as follows. Na(+) is not transported, but it plays an essential structural role and its presence is essential for fluoride channel function. Its function is as follows. Fluoride-specific ion channel. Important for reducing fluoride concentration in the cell, thus reducing its toxicity. This Bordetella parapertussis (strain 12822 / ATCC BAA-587 / NCTC 13253) protein is Fluoride-specific ion channel FluC.